Consider the following 985-residue polypeptide: Coiled-coil domain-containing protein 33 (985 aa).

The disordered stretch occupies residues 228 to 263 (MSPFSTDSDQEGLSWEAGPWQHPAQVPEEPQGRLDT). Residues 263–398 (TSQDPYPAAN…VFLRGVNEPL (136 aa)) enclose the C2 domain. Positions 599–745 (VEMNNYRRAM…LEERLCERKE (147 aa)) form a coiled coil. The tract at residues 821–842 (AERLQDTNGPGHPKSTETLPAQ) is disordered. Positions 885 to 928 (DKFNLLAKLEQAQSRILSLENQLEESARHWAREKQNLAIRLQEQ) form a coiled coil. The segment at 931-985 (GFGQPPNSIIIDQPNAGASKNPQQLSKLEPSLPSSDKKLNRPSDSQIEISNNQKT) is disordered. 2 stretches are compositionally biased toward polar residues: residues 946–956 (AGASKNPQQLS) and 972–985 (PSDS…NQKT).

The protein is Coiled-coil domain-containing protein 33 (Ccdc33) of Mus musculus (Mouse).